Here is a 226-residue protein sequence, read N- to C-terminus: Ribonuclease 3 (226 aa).

The RNase III domain occupies 7–129 (DARLQQALGY…LFGAVFLDAG (123 aa)). Residue glutamate 42 participates in Mg(2+) binding. The active site involves aspartate 46. The Mg(2+) site is built by aspartate 115 and glutamate 118. Glutamate 118 is a catalytic residue. The region spanning 156 to 226 (DPKTRLQEIL…ARQACAELQR (71 aa)) is the DRBM domain.

This sequence belongs to the ribonuclease III family. In terms of assembly, homodimer. Mg(2+) is required as a cofactor.

Its subcellular location is the cytoplasm. The enzyme catalyses Endonucleolytic cleavage to 5'-phosphomonoester.. Its function is as follows. Digests double-stranded RNA. Involved in the processing of primary rRNA transcript to yield the immediate precursors to the large and small rRNAs (23S and 16S). Processes some mRNAs, and tRNAs when they are encoded in the rRNA operon. Processes pre-crRNA and tracrRNA of type II CRISPR loci if present in the organism. The polypeptide is Ribonuclease 3 (Thiobacillus denitrificans (strain ATCC 25259 / T1)).